Here is a 200-residue protein sequence, read N- to C-terminus: Lipopolysaccharide core heptose(II)-phosphate phosphatase (200 aa).

Positions 1-25 (MLAFCRSSLKSKKYFIILLALAAIA) are cleaved as a signal peptide.

This sequence belongs to the phosphoglycerate mutase family. Ais subfamily.

It is found in the periplasm. It functions in the pathway bacterial outer membrane biogenesis; lipopolysaccharide metabolism. In terms of biological role, catalyzes the dephosphorylation of heptose(II) of the outer membrane lipopolysaccharide core. This chain is Lipopolysaccharide core heptose(II)-phosphate phosphatase, found in Escherichia coli (strain SE11).